The following is a 392-amino-acid chain: ESX-1 secretion-associated protein EspA (392 aa).

A disordered region spans residues 302–392; that stretch reads TRQALRPRAD…GQKVLVRNVV (91 aa). Gly residues predominate over residues 334–344; it reads QGMGGPVGMGG.

In terms of assembly, homodimer; disulfide-linked.

The protein localises to the secreted. Its function is as follows. Required for secretion of EsxA (ESAT-6) and EsxB (CFP-10) and for virulence. In Mycobacterium tuberculosis (strain CDC 1551 / Oshkosh), this protein is ESX-1 secretion-associated protein EspA.